Here is a 284-residue protein sequence, read N- to C-terminus: BTB/POZ domain-containing protein 2 (284 aa).

The BTB domain maps to 37–108 (SDTTLIIKGE…LYCDSPRIPA (72 aa)).

In terms of assembly, interacts with cul3.

It localises to the cytoplasm. The protein localises to the nucleus. Its pathway is protein modification; protein ubiquitination. Its function is as follows. Probable substrate-specific adapter of an E3 ubiquitin-protein ligase complex which mediates the ubiquitination and subsequent proteasomal degradation of target proteins. The polypeptide is BTB/POZ domain-containing protein 2 (btb2) (Schizosaccharomyces pombe (strain 972 / ATCC 24843) (Fission yeast)).